A 94-amino-acid polypeptide reads, in one-letter code: Small ribosomal subunit protein bS6 (94 aa).

Belongs to the bacterial ribosomal protein bS6 family.

Functionally, binds together with bS18 to 16S ribosomal RNA. This Clostridium botulinum (strain 657 / Type Ba4) protein is Small ribosomal subunit protein bS6.